Here is a 321-residue protein sequence, read N- to C-terminus: Glucokinase (321 aa).

8–13 lines the ATP pocket; it reads GDVGGT.

It belongs to the bacterial glucokinase family.

The protein resides in the cytoplasm. The catalysed reaction is D-glucose + ATP = D-glucose 6-phosphate + ADP + H(+). This chain is Glucokinase, found in Shigella dysenteriae serotype 1 (strain Sd197).